Here is a 256-residue protein sequence, read N- to C-terminus: Ubiquinone/menaquinone biosynthesis C-methyltransferase UbiE (256 aa).

S-adenosyl-L-methionine contacts are provided by residues T79, D100, and 128–129; that span reads DA.

It belongs to the class I-like SAM-binding methyltransferase superfamily. MenG/UbiE family.

It carries out the reaction a 2-demethylmenaquinol + S-adenosyl-L-methionine = a menaquinol + S-adenosyl-L-homocysteine + H(+). The catalysed reaction is a 2-methoxy-6-(all-trans-polyprenyl)benzene-1,4-diol + S-adenosyl-L-methionine = a 5-methoxy-2-methyl-3-(all-trans-polyprenyl)benzene-1,4-diol + S-adenosyl-L-homocysteine + H(+). It participates in quinol/quinone metabolism; menaquinone biosynthesis; menaquinol from 1,4-dihydroxy-2-naphthoate: step 2/2. It functions in the pathway cofactor biosynthesis; ubiquinone biosynthesis. Functionally, methyltransferase required for the conversion of demethylmenaquinol (DMKH2) to menaquinol (MKH2) and the conversion of 2-polyprenyl-6-methoxy-1,4-benzoquinol (DDMQH2) to 2-polyprenyl-3-methyl-6-methoxy-1,4-benzoquinol (DMQH2). The protein is Ubiquinone/menaquinone biosynthesis C-methyltransferase UbiE of Pseudomonas paraeruginosa (strain DSM 24068 / PA7) (Pseudomonas aeruginosa (strain PA7)).